The chain runs to 455 residues: ATP-dependent protease ATPase subunit HslU (455 aa).

ATP contacts are provided by residues V23, 65–70 (GVGKTE), D266, E333, and R405.

The protein belongs to the ClpX chaperone family. HslU subfamily. In terms of assembly, a double ring-shaped homohexamer of HslV is capped on each side by a ring-shaped HslU homohexamer. The assembly of the HslU/HslV complex is dependent on binding of ATP.

The protein localises to the cytoplasm. ATPase subunit of a proteasome-like degradation complex; this subunit has chaperone activity. The binding of ATP and its subsequent hydrolysis by HslU are essential for unfolding of protein substrates subsequently hydrolyzed by HslV. HslU recognizes the N-terminal part of its protein substrates and unfolds these before they are guided to HslV for hydrolysis. The chain is ATP-dependent protease ATPase subunit HslU from Xanthomonas axonopodis pv. citri (strain 306).